Here is a 577-residue protein sequence, read N- to C-terminus: Arginine--tRNA ligase (577 aa).

Residues 122 to 132 (PNVAKEMHVGH) carry the 'HIGH' region motif.

The protein belongs to the class-I aminoacyl-tRNA synthetase family. In terms of assembly, monomer.

It is found in the cytoplasm. It carries out the reaction tRNA(Arg) + L-arginine + ATP = L-arginyl-tRNA(Arg) + AMP + diphosphate. This is Arginine--tRNA ligase from Escherichia coli O139:H28 (strain E24377A / ETEC).